Here is a 627-residue protein sequence, read N- to C-terminus: 1-deoxy-D-xylulose-5-phosphate synthase (627 aa).

Thiamine diphosphate-binding positions include histidine 80 and 121–123 (GHS). Aspartate 152 provides a ligand contact to Mg(2+). Thiamine diphosphate-binding positions include 153-154 (GA), asparagine 181, tyrosine 288, and glutamate 370. Position 181 (asparagine 181) interacts with Mg(2+).

Belongs to the transketolase family. DXPS subfamily. In terms of assembly, homodimer. Mg(2+) serves as cofactor. It depends on thiamine diphosphate as a cofactor.

The enzyme catalyses D-glyceraldehyde 3-phosphate + pyruvate + H(+) = 1-deoxy-D-xylulose 5-phosphate + CO2. It functions in the pathway metabolic intermediate biosynthesis; 1-deoxy-D-xylulose 5-phosphate biosynthesis; 1-deoxy-D-xylulose 5-phosphate from D-glyceraldehyde 3-phosphate and pyruvate: step 1/1. Catalyzes the acyloin condensation reaction between C atoms 2 and 3 of pyruvate and glyceraldehyde 3-phosphate to yield 1-deoxy-D-xylulose-5-phosphate (DXP). This Aliivibrio salmonicida (strain LFI1238) (Vibrio salmonicida (strain LFI1238)) protein is 1-deoxy-D-xylulose-5-phosphate synthase.